A 322-amino-acid polypeptide reads, in one-letter code: uncharacterized protein (322 aa).

The Radical SAM core domain occupies 26-267 (HFGHKVFKVA…CDQLEIIPPE (242 aa)). Residues Cys42, Cys54, and Cys57 each contribute to the [4Fe-4S] cluster site.

The protein belongs to the radical SAM superfamily. The cofactor is [4Fe-4S] cluster.

This is an uncharacterized protein from Bacillus subtilis (strain 168).